Reading from the N-terminus, the 579-residue chain is Glucans biosynthesis protein G (579 aa).

Positions 1 to 37 are cleaved as a signal peptide; sequence MIVSPHKASRIPGNRLRKALMASAALVGLMSAGQLWA. A disordered region spans residues 516 to 579; sequence AKPAEEAKHD…TWSYQLPADE (64 aa). Residues 517 to 539 are compositionally biased toward basic and acidic residues; it reads KPAEEAKHDKTAAKHGKAEKAAK.

The protein belongs to the OpgD/OpgG family.

The protein resides in the periplasm. It functions in the pathway glycan metabolism; osmoregulated periplasmic glucan (OPG) biosynthesis. In terms of biological role, involved in the biosynthesis of osmoregulated periplasmic glucans (OPGs). In Pseudomonas putida (strain W619), this protein is Glucans biosynthesis protein G.